The primary structure comprises 146 residues: U1 small nuclear ribonucleoprotein C (146 aa).

The Matrin-type zinc finger occupies 4–36 (YYCDYCDTYLTHDSPSVRKTHCTGRKHRDNVKF). The segment at 64–96 (NNPFAGGPSSAPPKPSGVSIPPPNMGAPPRPGM) is disordered. Over residues 73–96 (SAPPKPSGVSIPPPNMGAPPRPGM) the composition is skewed to pro residues.

This sequence belongs to the U1 small nuclear ribonucleoprotein C family. U1 snRNP is composed of the 7 core Sm proteins B/B', D1, D2, D3, E, F and G that assemble in a heptameric protein ring on the Sm site of the small nuclear RNA to form the core snRNP, and at least 3 U1 snRNP-specific proteins U1-70K, U1-A and U1-C. U1-C interacts with U1 snRNA and the 5' splice-site region of the pre-mRNA.

It is found in the nucleus. In terms of biological role, component of the spliceosomal U1 snRNP, which is essential for recognition of the pre-mRNA 5' splice-site and the subsequent assembly of the spliceosome. U1-C is directly involved in initial 5' splice-site recognition for both constitutive and regulated alternative splicing. The interaction with the 5' splice-site seems to precede base-pairing between the pre-mRNA and the U1 snRNA. Stimulates commitment or early (E) complex formation by stabilizing the base pairing of the 5' end of the U1 snRNA and the 5' splice-site region. The sequence is that of U1 small nuclear ribonucleoprotein C from Drosophila pseudoobscura pseudoobscura (Fruit fly).